A 157-amino-acid polypeptide reads, in one-letter code: Ribonuclease (157 aa).

An N-terminal signal peptide occupies residues 1–34 (MMKMEGIALKKRLSWISVCLLVLVSAAGMLFSTA). Residues 35–47 (AKTETSSHKAHTE) constitute a propeptide that is removed on maturation. Glutamate 120 acts as the Proton acceptor in catalysis. The active-site Proton donor is histidine 149.

It belongs to the ribonuclease N1/T1 family.

Its subcellular location is the secreted. Functionally, hydrolyzes phosphodiester bonds in RNA, poly- and oligoribonucleotides resulting in 3'-nucleoside monophosphates via 2',3'-cyclophosphate intermediates. This Bacillus amyloliquefaciens (Bacillus velezensis) protein is Ribonuclease.